A 462-amino-acid chain; its full sequence is Glycogen synthase 1 (462 aa).

Residue Arg6 participates in ADP-alpha-D-glucose binding.

Belongs to the glycosyltransferase 1 family. Bacterial/plant glycogen synthase subfamily.

It catalyses the reaction [(1-&gt;4)-alpha-D-glucosyl](n) + ADP-alpha-D-glucose = [(1-&gt;4)-alpha-D-glucosyl](n+1) + ADP + H(+). The protein operates within glycan biosynthesis; glycogen biosynthesis. Functionally, synthesizes alpha-1,4-glucan chains using ADP-glucose. This is Glycogen synthase 1 from Bradyrhizobium diazoefficiens (strain JCM 10833 / BCRC 13528 / IAM 13628 / NBRC 14792 / USDA 110).